Here is a 459-residue protein sequence, read N- to C-terminus: DnaJ homolog subfamily A member 1 homolog (459 aa).

The J domain maps to 6–73 (EYYERLGVKP…EKRKMYDSYG (68 aa)). Residues 158–243 (GKLVKISISR…CKGKRVIQGK (86 aa)) form a CR-type zinc finger. Cysteine 171, cysteine 174, cysteine 188, cysteine 191, cysteine 215, cysteine 218, cysteine 231, and cysteine 234 together coordinate Zn(2+). CXXCXGXG motif repeat units follow at residues 171–178 (CKTCKGSG), 188–195 (CPTCNGSR), 215–222 (CHTCHGTG), and 231–238 (CKECKGKR). The tract at residues 405–459 (NTNEQSSHGGAGGAYQQHGGAYGHQKQQQQGFNPADFGAQFGGGGPQQAQQCQQQ) is disordered. A compositionally biased stretch (low complexity) spans 418–435 (AYQQHGGAYGHQKQQQQG). The residue at position 456 (cysteine 456) is a Cysteine methyl ester. Residue cysteine 456 is the site of S-farnesyl cysteine attachment. The propeptide at 457–459 (QQQ) is removed in mature form.

It is found in the membrane. It localises to the cytoplasm. The protein resides in the microsome. The protein localises to the mitochondrion. Its subcellular location is the nucleus. It is found in the perinuclear region. Functionally, co-chaperone for Hsp70 family members. Plays a role in protein transport into mitochondria and in the regulation of apoptosis via its role as co-chaperone. The polypeptide is DnaJ homolog subfamily A member 1 homolog (dnaja1) (Dictyostelium discoideum (Social amoeba)).